We begin with the raw amino-acid sequence, 975 residues long: C-1-tetrahydrofolate synthase, mitochondrial (975 aa).

The N-terminal 34 residues, 1 to 34 (MLSRLSLLSNSRAFQQARWRIYRLKVSPTVHASQ), are a transit peptide targeting the mitochondrion. The methylenetetrahydrofolate dehydrogenase and cyclohydrolase stretch occupies residues 35 to 343 (YHILSGRKLA…KPLPLHLESP (309 aa)). Substrate contacts are provided by residues 83 to 87 (YVRMK) and 130 to 132 (IQL). Residues 201–203 (GRS) and serine 226 each bind NADP(+). 301 to 305 (PGGVG) lines the substrate pocket. Positions 344–975 (VPSDIDISRA…DDDGEIEGLF (632 aa)) are formyltetrahydrofolate synthetase. 408–415 (TPLGEGKS) lines the ATP pocket.

In the N-terminal section; belongs to the tetrahydrofolate dehydrogenase/cyclohydrolase family. It in the C-terminal section; belongs to the formate--tetrahydrofolate ligase family. As to quaternary structure, homodimer.

The protein resides in the mitochondrion. It carries out the reaction (6R)-5,10-methylene-5,6,7,8-tetrahydrofolate + NADP(+) = (6R)-5,10-methenyltetrahydrofolate + NADPH. The enzyme catalyses (6R)-5,10-methenyltetrahydrofolate + H2O = (6R)-10-formyltetrahydrofolate + H(+). It catalyses the reaction (6S)-5,6,7,8-tetrahydrofolate + formate + ATP = (6R)-10-formyltetrahydrofolate + ADP + phosphate. It functions in the pathway one-carbon metabolism; tetrahydrofolate interconversion. Mitochondrial isozyme of C-1-tetrahydrofolate synthase. The trifunctional enzyme catalyzes the interconversion of the one-carbon derivatives of tetrahydrofolate (THF) between different oxidation states by the enzymatic activities 10-formyltetrahydrofolate synthetase, 5,lO-methenyltetrahydrofolate cyclohydrolase, and 5,lO-methylenetetrahydrofolate dehydrogenase. The sequence is that of C-1-tetrahydrofolate synthase, mitochondrial from Saccharomyces cerevisiae (strain ATCC 204508 / S288c) (Baker's yeast).